A 129-amino-acid chain; its full sequence is NADH-quinone oxidoreductase subunit K 2 (129 aa).

The next 3 membrane-spanning stretches (helical) occupy residues 3–23 (LAYP…GVLA), 28–48 (ILVL…LVAF), and 68–88 (LFTI…VLAV). The tract at residues 98–129 (DKLRDTAEGPEPDGPGTDGSAPTAAEKAEATA) is disordered. Positions 111-122 (GPGTDGSAPTAA) are enriched in low complexity.

Belongs to the complex I subunit 4L family. NDH-1 is composed of 14 different subunits. Subunits NuoA, H, J, K, L, M, N constitute the membrane sector of the complex.

It is found in the cell membrane. It carries out the reaction a quinone + NADH + 5 H(+)(in) = a quinol + NAD(+) + 4 H(+)(out). In terms of biological role, NDH-1 shuttles electrons from NADH, via FMN and iron-sulfur (Fe-S) centers, to quinones in the respiratory chain. The immediate electron acceptor for the enzyme in this species is believed to be a menaquinone. Couples the redox reaction to proton translocation (for every two electrons transferred, four hydrogen ions are translocated across the cytoplasmic membrane), and thus conserves the redox energy in a proton gradient. The polypeptide is NADH-quinone oxidoreductase subunit K 2 (Streptomyces avermitilis (strain ATCC 31267 / DSM 46492 / JCM 5070 / NBRC 14893 / NCIMB 12804 / NRRL 8165 / MA-4680)).